Reading from the N-terminus, the 927-residue chain is Protein translocase subunit SecA (927 aa).

ATP contacts are provided by residues glutamine 86, 104 to 108, and aspartate 494; that span reads GEGKT. Residues 853-927 are disordered; sequence YTAPDEDGTP…GSKAKRGKRR (75 aa). Over residues 860 to 879 the composition is skewed to basic and acidic residues; it reads GTPHAEVEAVDPGARERTSE. Over residues 907-927 the composition is skewed to basic residues; sequence RAKRRGASARSGSKAKRGKRR.

Belongs to the SecA family. As to quaternary structure, monomer and homodimer. Part of the essential Sec protein translocation apparatus which comprises SecA, SecYEG and auxiliary proteins SecDF. Other proteins may also be involved.

Its subcellular location is the cell membrane. It is found in the cytoplasm. The enzyme catalyses ATP + H2O + cellular proteinSide 1 = ADP + phosphate + cellular proteinSide 2.. Part of the Sec protein translocase complex. Interacts with the SecYEG preprotein conducting channel. Has a central role in coupling the hydrolysis of ATP to the transfer of proteins into and across the cell membrane, serving as an ATP-driven molecular motor driving the stepwise translocation of polypeptide chains across the membrane. The sequence is that of Protein translocase subunit SecA from Kocuria rhizophila (strain ATCC 9341 / DSM 348 / NBRC 103217 / DC2201).